The chain runs to 240 residues: Phosphoribosylaminoimidazole-succinocarboxamide synthase (240 aa).

The protein belongs to the SAICAR synthetase family.

The enzyme catalyses 5-amino-1-(5-phospho-D-ribosyl)imidazole-4-carboxylate + L-aspartate + ATP = (2S)-2-[5-amino-1-(5-phospho-beta-D-ribosyl)imidazole-4-carboxamido]succinate + ADP + phosphate + 2 H(+). Its pathway is purine metabolism; IMP biosynthesis via de novo pathway; 5-amino-1-(5-phospho-D-ribosyl)imidazole-4-carboxamide from 5-amino-1-(5-phospho-D-ribosyl)imidazole-4-carboxylate: step 1/2. This Anoxybacillus flavithermus (strain DSM 21510 / WK1) protein is Phosphoribosylaminoimidazole-succinocarboxamide synthase.